The following is a 158-amino-acid chain: UPF0262 protein RHOS4_22360 (158 aa).

It belongs to the UPF0262 family.

This is UPF0262 protein RHOS4_22360 from Cereibacter sphaeroides (strain ATCC 17023 / DSM 158 / JCM 6121 / CCUG 31486 / LMG 2827 / NBRC 12203 / NCIMB 8253 / ATH 2.4.1.) (Rhodobacter sphaeroides).